The primary structure comprises 680 residues: DNA-directed RNA polymerase subunit beta' (680 aa).

4 residues coordinate Zn(2+): cysteine 68, cysteine 70, cysteine 86, and cysteine 89. Residues aspartate 488, aspartate 490, and aspartate 492 each coordinate Mg(2+).

This sequence belongs to the RNA polymerase beta' chain family. RpoC1 subfamily. In plastids the minimal PEP RNA polymerase catalytic core is composed of four subunits: alpha, beta, beta', and beta''. When a (nuclear-encoded) sigma factor is associated with the core the holoenzyme is formed, which can initiate transcription. The cofactor is Mg(2+). Requires Zn(2+) as cofactor.

The protein localises to the plastid. Its subcellular location is the chloroplast. It carries out the reaction RNA(n) + a ribonucleoside 5'-triphosphate = RNA(n+1) + diphosphate. In terms of biological role, DNA-dependent RNA polymerase catalyzes the transcription of DNA into RNA using the four ribonucleoside triphosphates as substrates. This chain is DNA-directed RNA polymerase subunit beta', found in Nicotiana tabacum (Common tobacco).